A 184-amino-acid chain; its full sequence is UPF0397 protein SAR2767 (184 aa).

The next 5 membrane-spanning stretches (helical) occupy residues 11–31, 44–64, 77–97, 117–137, and 148–168; these read VVAIGIGAAVFVILGRFVVIP, AFLALISAIFGPFAGLMTGLI, AWWSWVICSGIIGCLYGWIGL, GQIIANIICWALIAPTLDILI, and QGVISAVLNIISVGIIGTILL.

This sequence belongs to the UPF0397 family.

It localises to the cell membrane. In Staphylococcus aureus (strain MRSA252), this protein is UPF0397 protein SAR2767.